The primary structure comprises 770 residues: DNA topoisomerase 1 (770 aa).

The 137-residue stretch at 4-140 (FRIIIAEKAD…EIRRAKFSAL (137 aa)) folds into the Toprim domain. Glu10 and Asp109 together coordinate Mg(2+). In terms of domain architecture, Topo IA-type catalytic spans 156–563 (NYSLADAADA…ESKKMLHEVL (408 aa)). The tract at residues 194 to 199 (SAGRVQ) is interaction with DNA. Tyr312 (O-(5'-phospho-DNA)-tyrosine intermediate) is an active-site residue. 3 C4-type zinc fingers span residues 611-638 (CEDP…CPVC), 673-700 (CPAD…YPKC), and 719-744 (CPYC…NMQC).

The protein belongs to the type IA topoisomerase family. Monomer. The cofactor is Mg(2+).

It carries out the reaction ATP-independent breakage of single-stranded DNA, followed by passage and rejoining.. Releases the supercoiling and torsional tension of DNA, which is introduced during the DNA replication and transcription, by transiently cleaving and rejoining one strand of the DNA duplex. Introduces a single-strand break via transesterification at a target site in duplex DNA. The scissile phosphodiester is attacked by the catalytic tyrosine of the enzyme, resulting in the formation of a DNA-(5'-phosphotyrosyl)-enzyme intermediate and the expulsion of a 3'-OH DNA strand. The free DNA strand then undergoes passage around the unbroken strand, thus removing DNA supercoils. Finally, in the religation step, the DNA 3'-OH attacks the covalent intermediate to expel the active-site tyrosine and restore the DNA phosphodiester backbone. This Thermoplasma acidophilum (strain ATCC 25905 / DSM 1728 / JCM 9062 / NBRC 15155 / AMRC-C165) protein is DNA topoisomerase 1.